The following is a 293-amino-acid chain: ATP synthase subunit a (293 aa).

Transmembrane regions (helical) follow at residues 39 to 59 (QVFGIFVVFIVLLTLFLVYWI), 73 to 93 (FVLLMQMLFVWAQDTTADLIG), 102 to 122 (YFLMLLLYLVSSNLIGLLGGI), 128 to 148 (SLTFTFSLGLATFLGIVIMGI), 172 to 192 (TLIPNPLSFLGEFAPLFSISL), 198 to 218 (ILGGTLILALFYNFWFFAFST), 224 to 244 (LALSLGAIFAGILTPALHVYF), and 245 to 265 (DVVVGTLQGYVFVMLTYNYWA).

It belongs to the ATPase A chain family. F-type ATPases have 2 components, CF(1) - the catalytic core - and CF(0) - the membrane proton channel. CF(1) has five subunits: alpha(3), beta(3), gamma(1), delta(1), epsilon(1). CF(0) has three main subunits: a(1), b(2) and c(9-12). The alpha and beta chains form an alternating ring which encloses part of the gamma chain. CF(1) is attached to CF(0) by a central stalk formed by the gamma and epsilon chains, while a peripheral stalk is formed by the delta and b chains.

The protein localises to the cell membrane. Its function is as follows. Key component of the proton channel; it plays a direct role in the translocation of protons across the membrane. The sequence is that of ATP synthase subunit a from Mycoplasma pneumoniae (strain ATCC 29342 / M129 / Subtype 1) (Mycoplasmoides pneumoniae).